We begin with the raw amino-acid sequence, 346 residues long: Probable alpha-1,2-galactosyltransferase gmh2 (346 aa).

Over 1–11 (MALMLSRIPRR) the chain is Cytoplasmic. A helical; Signal-anchor for type II membrane protein transmembrane segment spans residues 12–32 (FFFLFLTVGLIAGAFLYSLIY). Residues 33–346 (FVDVDLVSKV…LWQKFYALID (314 aa)) are Lumenal-facing. 3 N-linked (GlcNAc...) asparagine glycosylation sites follow: Asn-64, Asn-142, and Asn-224.

The protein belongs to the glycosyltransferase 34 family.

The protein resides in the golgi apparatus membrane. The polypeptide is Probable alpha-1,2-galactosyltransferase gmh2 (gmh2) (Schizosaccharomyces pombe (strain 972 / ATCC 24843) (Fission yeast)).